The sequence spans 204 residues: High frequency lysogenization protein HflD homolog (204 aa).

This sequence belongs to the HflD family.

The protein localises to the cytoplasm. It localises to the cell inner membrane. In Xylella fastidiosa (strain M23), this protein is High frequency lysogenization protein HflD homolog.